Consider the following 358-residue polypeptide: 3-dehydroquinate synthase (358 aa).

Residues glycine 102–aspartate 106, threonine 126–threonine 127, lysine 139, and lysine 148 contribute to the NAD(+) site. Positions 181, 244, and 260 each coordinate Zn(2+).

This sequence belongs to the sugar phosphate cyclases superfamily. Dehydroquinate synthase family. Requires Co(2+) as cofactor. It depends on Zn(2+) as a cofactor. NAD(+) serves as cofactor.

The protein resides in the cytoplasm. The catalysed reaction is 7-phospho-2-dehydro-3-deoxy-D-arabino-heptonate = 3-dehydroquinate + phosphate. It functions in the pathway metabolic intermediate biosynthesis; chorismate biosynthesis; chorismate from D-erythrose 4-phosphate and phosphoenolpyruvate: step 2/7. Functionally, catalyzes the conversion of 3-deoxy-D-arabino-heptulosonate 7-phosphate (DAHP) to dehydroquinate (DHQ). This Symbiobacterium thermophilum (strain DSM 24528 / JCM 14929 / IAM 14863 / T) protein is 3-dehydroquinate synthase.